Here is an 895-residue protein sequence, read N- to C-terminus: MGLTNILAAFIAVSSLFIQSLALNPYAKSNLAVYWGQGAGQNRLSYFCEKTSFDIIVVGFINVFPDQGPAGWPGSNFGNQCADSYYYTKNGTKTKLLDGCYQIKEDLPKCKALGKTILLSLGGGAVHDFYEVKSEESALNFADFLWGAFGPLTPDWTGPRPFGEASVDGFDFDIEKGSNFGYSIMVRRLRELFLQDPLNRYYISAAPQCIMPDKYLSHAISNSAFDFIFIQFYNNPSCSAKRWVTNPKSVTYTVDDWVKYIRKSGNPLAKLFIGLPASKSAAAKEDYLTPGEATKIVSTYMAKYPSTFGGMMVWEATASENNKLGGLPYADIMKEVLLRCDPDPPTSTVTSTISASTSTQTSSQSTTMETKTLSASTTPSSPSTVSPSSTMQTTSTGSTSTGTGTTSSQVTSSTTISTRSASTETVTTRSQEPPSTTISTRPASTETVTTRSQEPPSSTISTRSASTETVTTRSQEPPSSTISTRSASTETSTSSQDSPSTTISTKSAPTGTVTTRSQDLPSTTISTRSPETETETVTTKSQDSPSITLSTRSSSAETVSTRSQHSSSTTISTKSAPTETGTTSEHSTSMPVSTRSASTETVITRSQNSDSQSMTVSTRSPSTESITTRSQGSPSETFSTKSVPVDTISTELPSQTHSTTDSTPVSSSPTIPSGSTTIIPGTASDPVSAPTTTVPPNPTLTLAPSSSTTEDRTTITTIITTSYVTVCPTGFTTVTITYTTTYCPETASLTPTQAPIPGAPAPPPDGWTTIVTVCPQCAPTPTTVTLTVPTRSAFLPAPTETRPVVTVVPVPENPIKNVKPSESGDFVTVTTVAPATVTKTLEYNNPVDSDVNVQPTGGSSPVEFEGGAMTVRSMDVVAKALITAGAAVLGLFLGL.

The signal sequence occupies residues 1-22 (MGLTNILAAFIAVSSLFIQSLA). Positions 29 to 340 (SNLAVYWGQG…DIMKEVLLRC (312 aa)) constitute a GH18 domain. Asparagine 90 carries N-linked (GlcNAc...) asparagine glycosylation. Glutamate 175 (proton donor) is an active-site residue. The interval 343-712 (DPPTSTVTST…APSSSTTEDR (370 aa)) is disordered. Over residues 346–425 (TSTVTSTISA…ISTRSASTET (80 aa)) the composition is skewed to low complexity. Over residues 426–478 (VTTRSQEPPSTTISTRPASTETVTTRSQEPPSSTISTRSASTETVTTRSQEPP) the composition is skewed to polar residues. Positions 479–505 (SSTISTRSASTETSTSSQDSPSTTIST) are enriched in low complexity. The span at 506–543 (KSAPTGTVTTRSQDLPSTTISTRSPETETETVTTKSQD) shows a compositional bias: polar residues. Positions 544–555 (SPSITLSTRSSS) are enriched in low complexity. The segment covering 556 to 577 (AETVSTRSQHSSSTTISTKSAP) has biased composition (polar residues). A compositionally biased stretch (low complexity) spans 578–589 (TETGTTSEHSTS). Polar residues predominate over residues 590–657 (MPVSTRSAST…ISTELPSQTH (68 aa)). Low complexity-rich tracts occupy residues 658 to 692 (STTD…APTT) and 699 to 712 (TLTL…TEDR). Glycine 866 carries GPI-anchor amidated glycine lipidation. A propeptide spans 867-895 (GAMTVRSMDVVAKALITAGAAVLGLFLGL) (removed in mature form).

Belongs to the glycosyl hydrolase 18 family. Chitinase class III subfamily.

Its subcellular location is the cell membrane. It catalyses the reaction Random endo-hydrolysis of N-acetyl-beta-D-glucosaminide (1-&gt;4)-beta-linkages in chitin and chitodextrins.. Functionally, may be associated with endosporulation. The polypeptide is Endochitinase 2 (CTS2) (Coccidioides immitis (strain RS) (Valley fever fungus)).